A 505-amino-acid chain; its full sequence is UDP-N-acetylmuramate--L-alanine ligase (505 aa).

164-170 (GTHGKTT) provides a ligand contact to ATP.

Belongs to the MurCDEF family.

Its subcellular location is the cytoplasm. It catalyses the reaction UDP-N-acetyl-alpha-D-muramate + L-alanine + ATP = UDP-N-acetyl-alpha-D-muramoyl-L-alanine + ADP + phosphate + H(+). Its pathway is cell wall biogenesis; peptidoglycan biosynthesis. Cell wall formation. The sequence is that of UDP-N-acetylmuramate--L-alanine ligase from Synechocystis sp. (strain ATCC 27184 / PCC 6803 / Kazusa).